Consider the following 288-residue polypeptide: MSAKIIDGKTIAQQVRNEVAAVVQQRLAAGKRAPGLAVVLVGENPASQIYVASKRKACEEVGFVSRSYDLPMATSEAELLALIDSLNEDTEIDGILIQLPLPNGIDNVKVLERIHPDKDVDGFHPYNVGRLCQRAPKLRACTPRGIMTLLERYDIPTYGLNAVVVGASNIVGRPMSLELLLAGCTTTVTHRFTKNLRHHIENADLLVVAVGKPGFIPGEWIKPGAIVIDVGINRLESGKVVGDVAFDVAAERAGWITPVPGGVGPMTVATLIQNTLQACEEYHDISQN.

NADP(+)-binding positions include 166–168 (GAS) and I232.

Belongs to the tetrahydrofolate dehydrogenase/cyclohydrolase family. In terms of assembly, homodimer.

The catalysed reaction is (6R)-5,10-methylene-5,6,7,8-tetrahydrofolate + NADP(+) = (6R)-5,10-methenyltetrahydrofolate + NADPH. It catalyses the reaction (6R)-5,10-methenyltetrahydrofolate + H2O = (6R)-10-formyltetrahydrofolate + H(+). It functions in the pathway one-carbon metabolism; tetrahydrofolate interconversion. In terms of biological role, catalyzes the oxidation of 5,10-methylenetetrahydrofolate to 5,10-methenyltetrahydrofolate and then the hydrolysis of 5,10-methenyltetrahydrofolate to 10-formyltetrahydrofolate. This Yersinia pseudotuberculosis serotype O:1b (strain IP 31758) protein is Bifunctional protein FolD.